The primary structure comprises 300 residues: NAD kinase (300 aa).

Catalysis depends on Asp75, which acts as the Proton acceptor. Residues 75 to 76, 149 to 150, Arg177, Asp179, 190 to 195, Ala214, and Gln248 each bind NAD(+); these read DG, ND, and TAYALS.

The protein belongs to the NAD kinase family. The cofactor is a divalent metal cation.

The protein localises to the cytoplasm. It catalyses the reaction NAD(+) + ATP = ADP + NADP(+) + H(+). In terms of biological role, involved in the regulation of the intracellular balance of NAD and NADP, and is a key enzyme in the biosynthesis of NADP. Catalyzes specifically the phosphorylation on 2'-hydroxyl of the adenosine moiety of NAD to yield NADP. The polypeptide is NAD kinase (Burkholderia cenocepacia (strain ATCC BAA-245 / DSM 16553 / LMG 16656 / NCTC 13227 / J2315 / CF5610) (Burkholderia cepacia (strain J2315))).